Consider the following 478-residue polypeptide: Glycogen synthase (478 aa).

Lys15 lines the ADP-alpha-D-glucose pocket.

Belongs to the glycosyltransferase 1 family. Bacterial/plant glycogen synthase subfamily.

The catalysed reaction is [(1-&gt;4)-alpha-D-glucosyl](n) + ADP-alpha-D-glucose = [(1-&gt;4)-alpha-D-glucosyl](n+1) + ADP + H(+). It functions in the pathway glycan biosynthesis; glycogen biosynthesis. Its function is as follows. Synthesizes alpha-1,4-glucan chains using ADP-glucose. In Streptococcus uberis (strain ATCC BAA-854 / 0140J), this protein is Glycogen synthase.